Consider the following 224-residue polypeptide: CRP-like cAMP-activated global transcriptional regulator (224 aa).

Residues 64–70 (GRENLLT), 79–82 (GELS), 89–90 (RT), 134–135 (TN), 142–143 (IF), and 178–188 (EEIAQLVGASR) each bind 3',5'-cyclic AMP. In terms of domain architecture, HTH crp-type spans 144-217 (TDVPGRVAKQ…GKSVLISDSE (74 aa)). A DNA-binding region (H-T-H motif) is located at residues 177–196 (QEEIAQLVGASRETVNKALA).

In terms of assembly, homodimer.

Its function is as follows. Global transcriptional regulator that complexes with cAMP and binds to specific DNA promoter sites, causing DNA-bending, to regulate transcription. cAMP improves binding to specific DNA sequences, probably by altering protein conformation. Activates expression of whiB1. This is CRP-like cAMP-activated global transcriptional regulator from Mycobacterium tuberculosis (strain CDC 1551 / Oshkosh).